Consider the following 443-residue polypeptide: Ribulose bisphosphate carboxylase large chain (443 aa).

2 residues coordinate substrate: asparagine 89 and threonine 139. Lysine 141 acts as the Proton acceptor in catalysis. Lysine 143 contacts substrate. Residues lysine 167, aspartate 169, and glutamate 170 each contribute to the Mg(2+) site. Position 167 is an N6-carboxylysine (lysine 167). Histidine 260 serves as the catalytic Proton acceptor. Residues arginine 261, histidine 293, and serine 345 each coordinate substrate.

Belongs to the RuBisCO large chain family. Type I subfamily. Heterohexadecamer of 8 large chains and 8 small chains; disulfide-linked. The disulfide link is formed within the large subunit homodimers. Mg(2+) serves as cofactor. Post-translationally, the disulfide bond which can form in the large chain dimeric partners within the hexadecamer appears to be associated with oxidative stress and protein turnover.

It localises to the plastid. The protein localises to the chloroplast. The catalysed reaction is 2 (2R)-3-phosphoglycerate + 2 H(+) = D-ribulose 1,5-bisphosphate + CO2 + H2O. The enzyme catalyses D-ribulose 1,5-bisphosphate + O2 = 2-phosphoglycolate + (2R)-3-phosphoglycerate + 2 H(+). RuBisCO catalyzes two reactions: the carboxylation of D-ribulose 1,5-bisphosphate, the primary event in carbon dioxide fixation, as well as the oxidative fragmentation of the pentose substrate in the photorespiration process. Both reactions occur simultaneously and in competition at the same active site. The polypeptide is Ribulose bisphosphate carboxylase large chain (Antirrhinum majus (Garden snapdragon)).